The primary structure comprises 525 residues: uncharacterized protein (525 aa).

Residue serine 55 is modified to Phosphoserine. 13 helical membrane-spanning segments follow: residues alanine 81–tyrosine 101, leucine 120–leucine 140, lysine 147–alanine 167, leucine 173–glycine 193, methionine 208–valine 228, tryptophan 238–proline 258, phenylalanine 295–isoleucine 315, glycine 318–isoleucine 338, tyrosine 350–leucine 370, phenylalanine 388–cysteine 408, isoleucine 413–tryptophan 433, alanine 454–phenylalanine 474, and alanine 484–glycine 504.

It belongs to the major facilitator superfamily. CAR1 family.

Its subcellular location is the membrane. This is an uncharacterized protein from Schizosaccharomyces pombe (strain 972 / ATCC 24843) (Fission yeast).